The chain runs to 442 residues: Chaperone protein dnaJ A6, chloroplastic (442 aa).

The N-terminal 82 residues, 1–82, are a transit peptide targeting the chloroplast; the sequence is MAIIQLGSTC…PRRGSRFTVR (82 aa). Positions 86 to 150 constitute a J domain; the sequence is DYYSVLGVSK…EKKSLYDRYG (65 aa). The CR-type zinc-finger motif lies at 211–292; it reads GMEKEIEISR…CSGDGRVRKT (82 aa). Residues C224, C227, C241, C244, C267, C270, C280, and C283 each contribute to the Zn(2+) site. CXXCXGXG motif repeat units lie at residues 224 to 231, 241 to 248, 267 to 274, and 280 to 287; these read CGTCEGSG, CTTCGGQG, CSSCNGTG, and CGTCSGDG.

Belongs to the DnaJ family.

The protein localises to the plastid. It localises to the chloroplast. May function together with HSC70 chaperone to assist protein folding and prevent protein aggregation during heat stress in the chloroplast. This Arabidopsis thaliana (Mouse-ear cress) protein is Chaperone protein dnaJ A6, chloroplastic.